Reading from the N-terminus, the 496-residue chain is Cobyric acid synthase (496 aa).

Positions 258–427 (TLTVAAIRLP…WHGLLDNDAL (170 aa)) constitute a GATase cobBQ-type domain. The Nucleophile role is filled by cysteine 339. Residue histidine 419 is part of the active site.

The protein belongs to the CobB/CobQ family. CobQ subfamily.

It functions in the pathway cofactor biosynthesis; adenosylcobalamin biosynthesis. In terms of biological role, catalyzes amidations at positions B, D, E, and G on adenosylcobyrinic A,C-diamide. NH(2) groups are provided by glutamine, and one molecule of ATP is hydrogenolyzed for each amidation. This chain is Cobyric acid synthase, found in Mycolicibacterium smegmatis (strain ATCC 700084 / mc(2)155) (Mycobacterium smegmatis).